Consider the following 337-residue polypeptide: RNA 3'-terminal phosphate cyclase (337 aa).

Residues Q101 and 282–285 (HMSD) each bind ATP. H306 acts as the Tele-AMP-histidine intermediate in catalysis.

Belongs to the RNA 3'-terminal cyclase family. Type 1 subfamily.

The protein resides in the cytoplasm. The catalysed reaction is a 3'-end 3'-phospho-ribonucleotide-RNA + ATP = a 3'-end 2',3'-cyclophospho-ribonucleotide-RNA + AMP + diphosphate. Its function is as follows. Catalyzes the conversion of 3'-phosphate to a 2',3'-cyclic phosphodiester at the end of RNA. The mechanism of action of the enzyme occurs in 3 steps: (A) adenylation of the enzyme by ATP; (B) transfer of adenylate to an RNA-N3'P to produce RNA-N3'PP5'A; (C) and attack of the adjacent 2'-hydroxyl on the 3'-phosphorus in the diester linkage to produce the cyclic end product. The biological role of this enzyme is unknown but it is likely to function in some aspects of cellular RNA processing. This chain is RNA 3'-terminal phosphate cyclase, found in Saccharolobus islandicus (strain M.16.4 / Kamchatka #3) (Sulfolobus islandicus).